The following is a 284-amino-acid chain: Phosphonates import ATP-binding protein PhnC 2 (284 aa).

Positions 5–253 constitute an ABC transporter domain; it reads IEVRGLSKSF…MLRDLYGTEA (249 aa). 38 to 45 serves as a coordination point for ATP; that stretch reads GASGSGKS.

It belongs to the ABC transporter superfamily. Phosphonates importer (TC 3.A.1.9.1) family. In terms of assembly, the complex is composed of two ATP-binding proteins (PhnC), two transmembrane proteins (PhnE) and a solute-binding protein (PhnD).

It is found in the cell inner membrane. It catalyses the reaction phosphonate(out) + ATP + H2O = phosphonate(in) + ADP + phosphate + H(+). Part of the ABC transporter complex PhnCDE involved in phosphonates import. Responsible for energy coupling to the transport system. This chain is Phosphonates import ATP-binding protein PhnC 2, found in Cupriavidus necator (strain ATCC 17699 / DSM 428 / KCTC 22496 / NCIMB 10442 / H16 / Stanier 337) (Ralstonia eutropha).